The primary structure comprises 541 residues: Chaperonin GroEL 5 (541 aa).

ATP contacts are provided by residues 30-33 (TLGP), Gly-415, and Asp-496.

The protein belongs to the chaperonin (HSP60) family. In terms of assembly, forms a cylinder of 14 subunits composed of two heptameric rings stacked back-to-back. Interacts with the co-chaperonin GroES.

It is found in the cytoplasm. It carries out the reaction ATP + H2O + a folded polypeptide = ADP + phosphate + an unfolded polypeptide.. Its function is as follows. Together with its co-chaperonin GroES, plays an essential role in assisting protein folding. The GroEL-GroES system forms a nano-cage that allows encapsulation of the non-native substrate proteins and provides a physical environment optimized to promote and accelerate protein folding. In Bradyrhizobium diazoefficiens (strain JCM 10833 / BCRC 13528 / IAM 13628 / NBRC 14792 / USDA 110), this protein is Chaperonin GroEL 5.